Here is a 366-residue protein sequence, read N- to C-terminus: ADP-ribosylarginine hydrolase Tri1 (366 aa).

The interval 1–65 is N-terminal extension; sequence MIDLREDTWT…LNTPPCLIPE (65 aa). Positions 74–366 are ADP-ribosyl hydrolase domain; that stretch reads GALVGLAIGD…LFYMAPEEDF (293 aa). Residues Thr-116, Asp-117, Asp-118, Asp-161, and Asp-317 each coordinate Mg(2+).

It belongs to the ADP-ribosylglycohydrolase family. In terms of assembly, forms a stable complex with cognate effector protein Tre1-Sp. Requires Mg(2+) as cofactor.

It carries out the reaction N(omega)-(ADP-D-ribosyl)-L-arginyl-[protein] + H2O = ADP-D-ribose + L-arginyl-[protein]. Its function is as follows. Immunity component of a contact-dependent interbacterial competition system (also called effector-immunity systems). Acts as an arginine mono-ADP-ribosylhydrolase, mediating the removal of mono-ADP-ribose attached to arginine residues on proteins. De-ADP-ribosylates FtsZ, is able to act on other proteins as well. Neutralizes the toxic activity of cognate toxin Tre1-Sp. Expression of this protein alone in E.coli partially protects the cells against competition by wild-type S.proteamaculans. Neutralizes Tre1-Sp both by occluding its active site via its N-terminal extension and by hydrolyzing the ADP-ribosyl moiety from FtsZ; the 2 activities are dissociable by mutagenesis. This chain is ADP-ribosylarginine hydrolase Tri1, found in Serratia proteamaculans (strain 568).